The primary structure comprises 264 residues: Ribonuclease HII (264 aa).

Residues 69 to 263 enclose the RNase H type-2 domain; sequence KVVCGIDEVG…EENAKTITKP (195 aa). Positions 75, 76, and 166 each coordinate a divalent metal cation.

The protein belongs to the RNase HII family. Requires Mn(2+) as cofactor. The cofactor is Mg(2+).

Its subcellular location is the cytoplasm. The enzyme catalyses Endonucleolytic cleavage to 5'-phosphomonoester.. In terms of biological role, endonuclease that specifically degrades the RNA of RNA-DNA hybrids. This Macrococcus caseolyticus (strain JCSC5402) (Macrococcoides caseolyticum) protein is Ribonuclease HII.